The primary structure comprises 236 residues: E3 ubiquitin-protein ligase RNF187 (236 aa).

An RING-type zinc finger spans residues 12–53 (CALCQRAPREPVRADCGHRFCRACVVRFWAEEDGPFPCPECA). 2 positions are modified to asymmetric dimethylarginine; by PRMT1: arginine 98 and arginine 109. Lysine 195 participates in a covalent cross-link: Glycyl lysine isopeptide (Lys-Gly) (interchain with G-Cter in ubiquitin). Serine 200 bears the Phosphoserine mark. Glycyl lysine isopeptide (Lys-Gly) (interchain with G-Cter in ubiquitin) cross-links involve residues lysine 224 and lysine 225.

Homodimer. Interacts with JUN, independently of JUN phosphorylation. Interacts (via C-terminus) with TRIM7. Ubiquitinated; undergoes 'Lys-48'-linked autoubiquitination in the absence of growth factors and MAP3K1-induced 'Lys-63'-linked polyubiquitination. 'Lys-48'-autoubiquitination leads to degradation by the proteasome, while MAP3K1-induced 'Lys-63'-linked polyubiquitination results in the stabilization of the protein. 'Lys-48'- and 'Lys-63'-linked polyubiquitinations occur most probably on the same 3 C-terminal lysine residues (Lys-195, Lys-224 and Lys-225) and are thus mutually exclusive. Other sites of ubiquitination are not excluded. 'Lys-63'-linked polyubiquitination by TRIM7 in response to growth factor signaling via the MEK/ERK pathway enhances protein stability. Post-translationally, arginine methylation by PRMT1 stabilizes RNF187 by facilitating K63-linked ubiquitin chain formation, and enables dimerization, c-Jun interaction and subsequent AP1 target gene expression.

The protein resides in the cytoplasm. The protein localises to the nucleus. The enzyme catalyses S-ubiquitinyl-[E2 ubiquitin-conjugating enzyme]-L-cysteine + [acceptor protein]-L-lysine = [E2 ubiquitin-conjugating enzyme]-L-cysteine + N(6)-ubiquitinyl-[acceptor protein]-L-lysine.. It functions in the pathway protein modification; protein ubiquitination. In terms of biological role, E3 ubiquitin-protein ligase that acts as a coactivator of JUN-mediated gene activation in response to growth factor signaling via the MAP3K1 pathway, independently from MAPK8. In Mus musculus (Mouse), this protein is E3 ubiquitin-protein ligase RNF187 (Rnf187).